A 416-amino-acid polypeptide reads, in one-letter code: Nuclear hormone receptor family member nhr-59 (416 aa).

Residues 17–94 (QTFCQVCGQE…IGMDIQNFQF (78 aa)) constitute a DNA-binding region (nuclear receptor). NR C4-type zinc fingers lie at residues 20-40 (CQVCGQESHGAHFGAITCRAC) and 57-82 (CKDGRGRCKILTNGRSCCKKCRLKKC). The 254-residue stretch at 162–415 (TRLQKLSSSL…FSHPELVKDV (254 aa)) folds into the NR LBD domain.

This sequence belongs to the nuclear hormone receptor family.

It localises to the nucleus. Orphan nuclear receptor. In Caenorhabditis elegans, this protein is Nuclear hormone receptor family member nhr-59.